The chain runs to 151 residues: Flagellar assembly factor FliW (151 aa).

This sequence belongs to the FliW family. As to quaternary structure, interacts with translational regulator CsrA and flagellin(s).

The protein resides in the cytoplasm. Its function is as follows. Acts as an anti-CsrA protein, binds CsrA and prevents it from repressing translation of its target genes, one of which is flagellin. Binds to flagellin and participates in the assembly of the flagellum. This chain is Flagellar assembly factor FliW, found in Lachnospira eligens (strain ATCC 27750 / DSM 3376 / VPI C15-48 / C15-B4) (Eubacterium eligens).